The primary structure comprises 306 residues: Ribokinase (306 aa).

Residues 12–14, 40–44, and E141 each bind substrate; these read NAD and GKGAN. Residues N185 and 221-226 each bind ATP; that span reads TLGAKG. K(+) is bound by residues D247 and T249. ATP is bound at residue 252 to 253; sequence GD. D253 provides a ligand contact to substrate. D253 (proton acceptor) is an active-site residue. Residues S283, K286, G288, and S292 each contribute to the K(+) site.

It belongs to the carbohydrate kinase PfkB family. Ribokinase subfamily. In terms of assembly, homodimer. Mg(2+) serves as cofactor.

It localises to the cytoplasm. It catalyses the reaction D-ribose + ATP = D-ribose 5-phosphate + ADP + H(+). It participates in carbohydrate metabolism; D-ribose degradation; D-ribose 5-phosphate from beta-D-ribopyranose: step 2/2. With respect to regulation, activated by a monovalent cation that binds near, but not in, the active site. The most likely occupant of the site in vivo is potassium. Ion binding induces a conformational change that may alter substrate affinity. Functionally, catalyzes the phosphorylation of ribose at O-5 in a reaction requiring ATP and magnesium. The resulting D-ribose-5-phosphate can then be used either for sythesis of nucleotides, histidine, and tryptophan, or as a component of the pentose phosphate pathway. This chain is Ribokinase, found in Haemophilus influenzae (strain ATCC 51907 / DSM 11121 / KW20 / Rd).